We begin with the raw amino-acid sequence, 307 residues long: Polysialic acid O-acetyltransferase (307 aa).

The span at 1–90 (MLRLKTQDSR…LKTQDSRLKT (90 aa)) shows a compositional bias: basic and acidic residues. The tract at residues 1–95 (MLRLKTQDSR…SRLKTQDSFS (95 aa)) is disordered. A run of 13 repeats spans residues 3–9 (RLKTQDS), 10–16 (RLKTQDS), 17–23 (RLKTQDS), 24–30 (RLKTQDS), 31–37 (RLKTQDS), 38–44 (RLKTQDS), 45–51 (RLKTQDS), 52–58 (RLKTQDS), 59–65 (RLKTQDS), 66–72 (RLKTQDS), 73–79 (RLKTQDS), 80–86 (RLKTQDS), and 87–93 (RLKTQDS). The segment at 3-93 (RLKTQDSRLK…QDSRLKTQDS (91 aa)) is 13 X 7 AA tandem repeat of RLKTQDS encoded by a 7 nucleotide repeat. Residues 208–210 (DGH), Arg-237, Lys-243, Lys-261, and Lys-278 contribute to the acetyl-CoA site.

Belongs to the transferase hexapeptide repeat family. As to quaternary structure, homotrimer. Hexamer formed by two homotrimers.

It carries out the reaction [N-acetyl-alpha-D-neuraminosyl-(2-&gt;8)](n) + n acetyl-CoA = [N,O(9)-diacetyl-alpha-D-neuraminosyl-(2-&gt;8)](n) + n CoA. The catalysed reaction is [N-acetyl-alpha-D-neuraminosyl-(2-&gt;8)](n) + n acetyl-CoA = [O(7),N-diacetyl-alpha-D-neuraminosyl-(2-&gt;8)](n) + n CoA. Functionally, catalyzes the O-acetylation of capsular polymeric sialic acid. Shows high substrate specificity toward polymers of sialic acid that contains a large number of residues. The polypeptide is Polysialic acid O-acetyltransferase (Escherichia coli O1:K1 / APEC).